We begin with the raw amino-acid sequence, 85 residues long: Putative membrane protein insertion efficiency factor (85 aa).

Belongs to the UPF0161 family.

It localises to the cell inner membrane. Could be involved in insertion of integral membrane proteins into the membrane. The chain is Putative membrane protein insertion efficiency factor from Enterobacter sp. (strain 638).